The following is an 865-amino-acid chain: High affinity cAMP-specific and IBMX-insensitive 3',5'-cyclic phosphodiesterase 8B (865 aa).

Disordered stretches follow at residues 17–40 (CRDS…TAPL) and 52–92 (AMPP…TCRG). Polar residues predominate over residues 23-36 (SNSPRQTSSVSQGP). Residues 75–90 (GSGSSTGSSGPATTTC) show a composition bias toward low complexity. In terms of domain architecture, PAS spans 247–318 (ACNSVFTALD…DTINTCIKKG (72 aa)). The segment at 373–415 (IHRDSGDNSQTEPHSFRHKSRRKESIDVKSISSRGSDAPSLQN) is disordered. The segment covering 402–415 (SISSRGSDAPSLQN) has biased composition (polar residues). Serine 497 is modified (phosphoserine). The 337-residue stretch at 519–855 (TINDVPPSIA…KHWKTLDDLK (337 aa)) folds into the PDEase domain. Residue histidine 595 is the Proton donor of the active site. A divalent metal cation is bound by residues histidine 599, histidine 635, and aspartate 636. Residues serine 731 and serine 734 each carry the phosphoserine modification. Aspartate 761 contacts a divalent metal cation.

This sequence belongs to the cyclic nucleotide phosphodiesterase family. PDE8 subfamily. Requires a divalent metal cation as cofactor. Widely expressed.

The enzyme catalyses 3',5'-cyclic AMP + H2O = AMP + H(+). It functions in the pathway purine metabolism; 3',5'-cyclic AMP degradation; AMP from 3',5'-cyclic AMP: step 1/1. Its function is as follows. Hydrolyzes the second messenger cAMP, which is a key regulator of many important physiological processes. May be involved in specific signaling in the thyroid gland. The sequence is that of High affinity cAMP-specific and IBMX-insensitive 3',5'-cyclic phosphodiesterase 8B (Pde8b) from Mus musculus (Mouse).